Consider the following 430-residue polypeptide: Adenylosuccinate synthetase (430 aa).

GTP contacts are provided by residues 13–19 and 41–43; these read GDEGKGK and GHT. Aspartate 14 serves as the catalytic Proton acceptor. 2 residues coordinate Mg(2+): aspartate 14 and glycine 41. IMP is bound by residues 14–17, 39–42, threonine 130, arginine 144, glutamine 225, threonine 240, and arginine 304; these read DEGK and NAGH. Histidine 42 functions as the Proton donor in the catalytic mechanism. Position 300–306 (300–306) interacts with substrate; sequence STTGRAR. Residues arginine 306, 332–334, and 414–416 contribute to the GTP site; these read KLD and STG.

The protein belongs to the adenylosuccinate synthetase family. In terms of assembly, homodimer. Requires Mg(2+) as cofactor.

The protein localises to the cytoplasm. The enzyme catalyses IMP + L-aspartate + GTP = N(6)-(1,2-dicarboxyethyl)-AMP + GDP + phosphate + 2 H(+). It functions in the pathway purine metabolism; AMP biosynthesis via de novo pathway; AMP from IMP: step 1/2. Plays an important role in the de novo pathway of purine nucleotide biosynthesis. Catalyzes the first committed step in the biosynthesis of AMP from IMP. This chain is Adenylosuccinate synthetase, found in Alcanivorax borkumensis (strain ATCC 700651 / DSM 11573 / NCIMB 13689 / SK2).